A 302-amino-acid chain; its full sequence is RuBisCO operon transcriptional regulator (302 aa).

The HTH lysR-type domain maps to methionine 1–threonine 60. Positions tyrosine 20 to arginine 39 form a DNA-binding region, H-T-H motif.

Belongs to the LysR transcriptional regulatory family.

In terms of biological role, trans-acting transcriptional regulator of RuBisCO genes (rbcAB) expression. In Allochromatium vinosum (Chromatium vinosum), this protein is RuBisCO operon transcriptional regulator (rbcR).